The chain runs to 252 residues: tRNA (guanine-N(1)-)-methyltransferase (252 aa).

Residues G113 and 133–138 contribute to the S-adenosyl-L-methionine site; that span reads LGDYVL.

It belongs to the RNA methyltransferase TrmD family. In terms of assembly, homodimer.

The protein resides in the cytoplasm. The enzyme catalyses guanosine(37) in tRNA + S-adenosyl-L-methionine = N(1)-methylguanosine(37) in tRNA + S-adenosyl-L-homocysteine + H(+). Specifically methylates guanosine-37 in various tRNAs. The protein is tRNA (guanine-N(1)-)-methyltransferase of Stenotrophomonas maltophilia (strain R551-3).